Consider the following 470-residue polypeptide: 3-isopropylmalate dehydratase large subunit (470 aa).

The [4Fe-4S] cluster site is built by Cys348, Cys409, and Cys412.

The protein belongs to the aconitase/IPM isomerase family. LeuC type 1 subfamily. In terms of assembly, heterodimer of LeuC and LeuD. [4Fe-4S] cluster is required as a cofactor.

The enzyme catalyses (2R,3S)-3-isopropylmalate = (2S)-2-isopropylmalate. It functions in the pathway amino-acid biosynthesis; L-leucine biosynthesis; L-leucine from 3-methyl-2-oxobutanoate: step 2/4. In terms of biological role, catalyzes the isomerization between 2-isopropylmalate and 3-isopropylmalate, via the formation of 2-isopropylmaleate. In Thioalkalivibrio sulfidiphilus (strain HL-EbGR7), this protein is 3-isopropylmalate dehydratase large subunit.